Consider the following 367-residue polypeptide: tRNA/tmRNA (uracil-C(5))-methyltransferase (367 aa).

Gln-190, Tyr-218, Asn-223, Glu-239, and Asp-299 together coordinate S-adenosyl-L-methionine. The active-site Nucleophile is Cys-324. Residue Glu-358 is the Proton acceptor of the active site.

It belongs to the class I-like SAM-binding methyltransferase superfamily. RNA M5U methyltransferase family. TrmA subfamily.

The catalysed reaction is uridine(54) in tRNA + S-adenosyl-L-methionine = 5-methyluridine(54) in tRNA + S-adenosyl-L-homocysteine + H(+). The enzyme catalyses uridine(341) in tmRNA + S-adenosyl-L-methionine = 5-methyluridine(341) in tmRNA + S-adenosyl-L-homocysteine + H(+). In terms of biological role, dual-specificity methyltransferase that catalyzes the formation of 5-methyluridine at position 54 (m5U54) in all tRNAs, and that of position 341 (m5U341) in tmRNA (transfer-mRNA). The sequence is that of tRNA/tmRNA (uracil-C(5))-methyltransferase from Serratia proteamaculans (strain 568).